A 530-amino-acid polypeptide reads, in one-letter code: Pancreatic secretory granule membrane major glycoprotein GP2 (530 aa).

The first 21 residues, 1–21 (MVACDLLWLAAASCLLTLVFP), serve as a signal peptide directing secretion. Asparagine 33 carries N-linked (GlcNAc...) asparagine glycosylation. 11 disulfide bridges follow: cysteine 41–cysteine 52, cysteine 56–cysteine 150, cysteine 78–cysteine 168, cysteine 100–cysteine 138, cysteine 106–cysteine 173, cysteine 131–cysteine 139, cysteine 183–cysteine 193, cysteine 187–cysteine 202, cysteine 204–cysteine 234, cysteine 222–cysteine 313, and cysteine 254–cysteine 277. The segment at 54–74 (DPCQNHTVLNDPSRSTENTVS) is D10C. N-linked (GlcNAc...) asparagine glycosylation is found at asparagine 58 and asparagine 127. The 45-residue stretch at 179 to 223 (APKKCEIACRPEEECVFQNNSWTCVCRQDLNVSDTLSLQPLLDCG) folds into the EGF-like domain. N-linked (GlcNAc...) asparagine glycans are attached at residues asparagine 197 and asparagine 209. The tract at residues 221-314 (DCGANEIKVK…FLVNVNFQCA (94 aa)) is ZP-N. The ZP domain occupies 221-477 (DCGANEIKVK…PSCSTSRLRS (257 aa)). Residues asparagine 284 and asparagine 320 are each glycosylated (N-linked (GlcNAc...) asparagine). Positions 315–338 (YPLDMNVSLQTALQPIVSSLNVDV) are flexible ZP-N/ZP-C linker. An internal hydrophobic patch (IHP) region spans residues 339-350 (GGAGEFTVTMAL). The segment at 339–477 (GGAGEFTVTM…PSCSTSRLRS (139 aa)) is ZP-C. Disulfide bonds link cysteine 394–cysteine 454, cysteine 415–cysteine 470, and cysteine 459–cysteine 466. The external hydrophobic patch (EHP) stretch occupies residues 484–492 (LTRVLDIGP). The GPI-anchor amidated asparagine moiety is linked to residue asparagine 505. Residues 506–530 (GTPRNTGFLLAWPTFFLPVFLAWLF) constitute a propeptide, removed in mature form.

Interacts with SYCN. Interacts with bacterial adhesin fimH. In terms of processing, N-glycosylated. As to expression, expressed in pancreas.

It localises to the zymogen granule membrane. The protein localises to the secreted. The protein resides in the cell membrane. It is found in the apical cell membrane. Its subcellular location is the membrane raft. It localises to the endosome. Functionally, functions as an intestinal M-cell transcytotic receptor specific of type-I-piliated bacteria that participates in the mucosal immune response toward these bacteria. At the apical membrane of M-cells it binds fimH, a protein of the bacteria type I pilus tip. Internalizes bound bacteria, like E.coli and S.typhimurium, from the lumen of the intestine and delivers them, through M-cells, to the underlying organized lymphoid follicles where they are captured by antigen-presenting dendritic cells to elicit a mucosal immune response. This Rattus norvegicus (Rat) protein is Pancreatic secretory granule membrane major glycoprotein GP2.